Here is a 354-residue protein sequence, read N- to C-terminus: Guanine nucleotide-binding protein G(o) subunit alpha (354 aa).

Residue Gly2 is the site of N-myristoyl glycine attachment. A lipid anchor (S-palmitoyl cysteine) is attached at Cys3. The G-alpha domain maps to 32-354 (KDIKLLLLGA…ANNLRGCGLY (323 aa)). Residues 35-48 (KLLLLGAGESGKST) form a G1 motif region. Residues 40–47 (GAGESGKS), 176–182 (LRTRVKT), 201–205 (DVGGQ), 270–273 (NKKD), and Ala326 each bind GTP. Residues Ser47 and Thr182 each coordinate Mg(2+). Positions 174–182 (DILRTRVKT) are G2 motif. The tract at residues 197–206 (FKLFDVGGQR) is G3 motif. Positions 266-273 (ILFLNKKD) are G4 motif. Positions 324–329 (TCATDT) are G5 motif.

Belongs to the G-alpha family. G(i/o/t/z) subfamily. In terms of assembly, g proteins are composed of 3 units; alpha, beta and gamma. The alpha chain contains the guanine nucleotide binding site.

Functionally, guanine nucleotide-binding proteins (G proteins) are involved as modulators or transducers in various transmembrane signaling systems. The G(o) protein function is not clear. The protein is Guanine nucleotide-binding protein G(o) subunit alpha of Locusta migratoria (Migratory locust).